We begin with the raw amino-acid sequence, 356 residues long: Tyrosine recombinase XerS (356 aa).

Residues 16 to 121 (IMPSYVLEYY…ALSSLYKYLT (106 aa)) enclose the Core-binding (CB) domain. The Tyr recombinase domain maps to 169-354 (GFLDYIDNEY…INEEQKNALD (186 aa)). Catalysis depends on residues Arg-210, Lys-234, His-306, Arg-309, and His-332. Tyr-341 functions as the O-(3'-phospho-DNA)-tyrosine intermediate in the catalytic mechanism.

Belongs to the 'phage' integrase family. XerS subfamily.

It is found in the cytoplasm. Its activity is regulated as follows. FtsK is required for recombination. Site-specific tyrosine recombinase, which acts by catalyzing the cutting and rejoining of the recombining DNA molecules. Essential to convert dimers of the bacterial chromosome into monomers to permit their segregation at cell division. This is Tyrosine recombinase XerS from Lactococcus lactis subsp. lactis (strain IL1403) (Streptococcus lactis).